A 508-amino-acid polypeptide reads, in one-letter code: Histidine--tRNA ligase, cytoplasmic (508 aa).

The WHEP-TRS domain occupies Ser-3–Pro-59. Residue Ser-66 is modified to Phosphoserine. L-histidine-binding positions include Asp-130–Thr-132, Arg-157, Asp-177, Arg-326, and Tyr-330–Tyr-331.

The protein belongs to the class-II aminoacyl-tRNA synthetase family. Homodimer.

It is found in the cytoplasm. It catalyses the reaction tRNA(His) + L-histidine + ATP = L-histidyl-tRNA(His) + AMP + diphosphate + H(+). Its function is as follows. Catalyzes the ATP-dependent ligation of histidine to the 3'-end of its cognate tRNA, via the formation of an aminoacyl-adenylate intermediate (His-AMP). Plays a role in axon guidance. This Mesocricetus auratus (Golden hamster) protein is Histidine--tRNA ligase, cytoplasmic (HARS1).